Consider the following 219-residue polypeptide: 3,4-dihydroxy-2-butanone 4-phosphate synthase (219 aa).

Residues 37 to 38, Asp-42, 150 to 154, and Glu-174 each bind D-ribulose 5-phosphate; these read RE and RRGHT. Residue Glu-38 coordinates Mg(2+). A Mg(2+)-binding site is contributed by His-153.

Belongs to the DHBP synthase family. In terms of assembly, homodimer. Requires Mg(2+) as cofactor. Mn(2+) serves as cofactor.

It catalyses the reaction D-ribulose 5-phosphate = (2S)-2-hydroxy-3-oxobutyl phosphate + formate + H(+). Its pathway is cofactor biosynthesis; riboflavin biosynthesis; 2-hydroxy-3-oxobutyl phosphate from D-ribulose 5-phosphate: step 1/1. Functionally, catalyzes the conversion of D-ribulose 5-phosphate to formate and 3,4-dihydroxy-2-butanone 4-phosphate. This Oleidesulfovibrio alaskensis (strain ATCC BAA-1058 / DSM 17464 / G20) (Desulfovibrio alaskensis) protein is 3,4-dihydroxy-2-butanone 4-phosphate synthase.